The chain runs to 418 residues: Tyrosine--tRNA ligase (418 aa).

Y38 contributes to the L-tyrosine binding site. Residues 43 to 52 (CTARSLHIGS) carry the 'HIGH' region motif. Residues Y175 and Q179 each coordinate L-tyrosine. The 'KMSKS' region motif lies at 235 to 239 (KMGKT). An ATP-binding site is contributed by K238. Residues 348 to 413 (LSVVKLLQVS…CGKKRHLKVV (66 aa)) form the S4 RNA-binding domain.

It belongs to the class-I aminoacyl-tRNA synthetase family. TyrS type 1 subfamily. Homodimer.

It localises to the cytoplasm. The catalysed reaction is tRNA(Tyr) + L-tyrosine + ATP = L-tyrosyl-tRNA(Tyr) + AMP + diphosphate + H(+). In terms of biological role, catalyzes the attachment of tyrosine to tRNA(Tyr) in a two-step reaction: tyrosine is first activated by ATP to form Tyr-AMP and then transferred to the acceptor end of tRNA(Tyr). The sequence is that of Tyrosine--tRNA ligase from Ehrlichia ruminantium (strain Gardel).